The following is a 257-amino-acid chain: Hydroxyacylglutathione hydrolase (257 aa).

7 residues coordinate Zn(2+): His54, His56, Asp58, His59, His113, Asp137, and His175.

The protein belongs to the metallo-beta-lactamase superfamily. Glyoxalase II family. As to quaternary structure, monomer. Requires Zn(2+) as cofactor.

The enzyme catalyses an S-(2-hydroxyacyl)glutathione + H2O = a 2-hydroxy carboxylate + glutathione + H(+). The protein operates within secondary metabolite metabolism; methylglyoxal degradation; (R)-lactate from methylglyoxal: step 2/2. Functionally, thiolesterase that catalyzes the hydrolysis of S-D-lactoyl-glutathione to form glutathione and D-lactic acid. The polypeptide is Hydroxyacylglutathione hydrolase (Nostoc punctiforme (strain ATCC 29133 / PCC 73102)).